The primary structure comprises 638 residues: Neuroendocrine convertase 2 (638 aa).

The N-terminal stretch at 1–25 (MKGGCVSQWKAAAGFLFCVMVFASA) is a signal peptide. Positions 26 to 109 (ERPVFTNHFL…QQEGFDRKKR (84 aa)) are excised as a propeptide. The Peptidase S8 domain occupies 129–453 (QWYLINTGQA…YGVLDAGAMV (325 aa)). Residues Asp167 and His208 each act as charge relay system in the active site. Disulfide bonds link Cys225/Cys376 and Cys317/Cys347. N-linked (GlcNAc...) asparagine glycosylation occurs at Asn375. Ser384 (charge relay system) is an active-site residue. A P/Homo B domain is found at 461–597 (TVPERFHCVG…TLMLHGTQSA (137 aa)). Cys468 and Cys494 are disulfide-bonded. Asn514 and Asn524 each carry an N-linked (GlcNAc...) asparagine glycan.

Belongs to the peptidase S8 family. Furin subfamily.

The protein resides in the cytoplasmic vesicle. It localises to the secretory vesicle. Its subcellular location is the secreted. The enzyme catalyses Release of protein hormones and neuropeptides from their precursors, generally by hydrolysis of -Lys-Arg-|- bonds.. In terms of biological role, serine endopeptidase which is involved in the processing of hormone and other protein precursors at sites comprised of pairs of basic amino acid residues. Responsible for the release of glucagon from proglucagon in pancreatic A cells. This chain is Neuroendocrine convertase 2 (PCSK2), found in Homo sapiens (Human).